A 492-amino-acid chain; its full sequence is 5-taurinomethyluridine-[tRNA] synthase subunit GTPB3, mitochondrial (492 aa).

A mitochondrion-targeting transit peptide spans 1-20 (MWRGLWTLAAQAARGPRRLC). Arg-52, Glu-112, and Lys-152 together coordinate 5,10-methylenetetrahydrofolate. The TrmE-type G domain maps to 249–416 (GVHVVVTGPP…LLEALRKELA (168 aa)). GTP is bound by residues 256–263 (GPPNAGKS), 282–286 (GTTRD), 303–306 (DTAG), 374–377 (NKSD), and 397–399 (SCL). Asn-259 contributes to the K(+) binding site. Positions 263 and 284 each coordinate Mg(2+). Lys-492 contacts 5,10-methylenetetrahydrofolate.

It belongs to the TRAFAC class TrmE-Era-EngA-EngB-Septin-like GTPase superfamily. TrmE GTPase family. As to quaternary structure, homodimer; forms a dimer in the presence of potassium. Interacts with MTO1; forms the GTPBP3-MTO1 complex composed of homodimers of GTPBP3 and MTO1. In terms of assembly, homodimer, forms homodimer in vivo. It depends on K(+) as a cofactor. As to expression, ubiquitously expressed.

Its subcellular location is the mitochondrion. It is found in the cytoplasm. It carries out the reaction GTP + H2O = GDP + phosphate + H(+). Its function is as follows. GTPase component of the GTPBP3-MTO1 complex that catalyzes the 5-taurinomethyluridine (taum(5)U) modification at the 34th wobble position (U34) of mitochondrial tRNAs (mt-tRNAs), which plays a role in mt-tRNA decoding and mitochondrial translation. Taum(5)U formation on mammalian mt-tRNA requires the presence of both GTPBP3-mediated GTPase activity and MTO1 catalytic activity. The chain is 5-taurinomethyluridine-[tRNA] synthase subunit GTPB3, mitochondrial from Homo sapiens (Human).